The primary structure comprises 295 residues: Proline-rich proteoglycan 2 (295 aa).

The first 16 residues, 1-16 (MLVVLLTAALLVLSSA), serve as a signal peptide directing secretion. The tract at residues 16-295 (AQGVDEEVVY…QSSFLWSFSA (280 aa)) is disordered. Residues 26–41 (EDSSQQLELEQQSQGH) are compositionally biased toward low complexity. Over residues 48-58 (PPPGGLPPRPP) the composition is skewed to pro residues. Residues 62–78 (ENGDGDDNDDGDDDGSG) show a composition bias toward acidic residues. 2 stretches are compositionally biased toward pro residues: residues 100–187 (PPPA…PPGG) and 194–278 (QGPP…PQGP).

Post-translationally, contains glycosaminoglycans of chondroitin-sulfate and heparan types.

It localises to the secreted. The protein is Proline-rich proteoglycan 2 (Prpg2) of Rattus norvegicus (Rat).